The primary structure comprises 487 residues: Rhoptry apical surface protein 1 (487 aa).

The interval 337–487 (EVAMSGRGGH…EEEQPLLFTQ (151 aa)) is disordered. Composition is skewed to basic and acidic residues over residues 385 to 399 (DGIR…DRRA) and 454 to 475 (EKNE…GVEY).

As to quaternary structure, interacts with RASP2.

The protein localises to the cytoplasmic vesicle. The protein resides in the secretory vesicle. Its subcellular location is the rhoptry membrane. The sequence is that of Rhoptry apical surface protein 1 from Toxoplasma gondii (strain ATCC 50853 / GT1).